The primary structure comprises 249 residues: Chitooligosaccharide deacetylase (249 aa).

Residues histidine 61 and histidine 125 each coordinate Mg(2+).

The protein belongs to the YdjC deacetylase family. ChbG subfamily. As to quaternary structure, homodimer. It depends on Mg(2+) as a cofactor.

The protein resides in the cytoplasm. The enzyme catalyses N,N'-diacetylchitobiose + H2O = N-acetyl-beta-D-glucosaminyl-(1-&gt;4)-D-glucosamine + acetate. It catalyses the reaction diacetylchitobiose-6'-phosphate + H2O = N'-monoacetylchitobiose-6'-phosphate + acetate. Its pathway is glycan degradation; chitin degradation. In terms of biological role, involved in the degradation of chitin. ChbG is essential for growth on the acetylated chitooligosaccharides chitobiose and chitotriose but is dispensable for growth on cellobiose and chitosan dimer, the deacetylated form of chitobiose. Deacetylation of chitobiose-6-P and chitotriose-6-P is necessary for both the activation of the chb promoter by the regulatory protein ChbR and the hydrolysis of phosphorylated beta-glucosides by the phospho-beta-glucosidase ChbF. Catalyzes the removal of only one acetyl group from chitobiose-6-P to yield monoacetylchitobiose-6-P, the inducer of ChbR and the substrate of ChbF. The sequence is that of Chitooligosaccharide deacetylase from Escherichia coli (strain K12 / MC4100 / BW2952).